The following is a 242-amino-acid chain: N-alpha-acetyltransferase 60 (242 aa).

Topologically, residues 1-192 (MTEVVPSSAL…GGHPPWTILD (192 aa)) are cytoplasmic. The region spanning 13–182 (VSLRLLCHDD…DGFTYVLYIN (170 aa)) is the N-acetyltransferase domain. Tyr38 is a binding site for substrate. At Lys79 the chain carries N6-acetyllysine; by autocatalysis. The active site involves Tyr97. Leu99 is a binding site for substrate. 101 to 103 (LGV) serves as a coordination point for acetyl-CoA. An N6-acetyllysine; by autocatalysis mark is found at Lys105, Lys109, and Lys121. Acetyl-CoA is bound at residue 109–114 (KHGIGS). His138 is an active-site residue. Residues Asn143 and 150–153 (YENR) each bind acetyl-CoA. Lys156 carries the N6-acetyllysine; by autocatalysis modification. A required for homodimerization region spans residues 162 to 173 (PYYYSIRGVLKD). Tyr165 lines the substrate pocket. An intramembrane region (helical) is located at residues 193 to 236 (YIQHLGSALASLSPCSIPHRVYRQAHSLLCSFLPWSGISSKSGI). At 237 to 242 (EYSRTM) the chain is on the cytoplasmic side.

Belongs to the acetyltransferase family. NAA60 subfamily. Monomer and homodimer; monomer in presence of substrate and homodimer in its absence. In terms of processing, acetylated: autoacetylation is required for optimal acetyltransferase activity.

It localises to the golgi apparatus membrane. The enzyme catalyses N-terminal L-methionyl-[transmembrane protein] + acetyl-CoA = N-terminal N(alpha)-acetyl-L-methionyl-[transmembrane protein] + CoA + H(+). The catalysed reaction is L-lysyl-[protein] + acetyl-CoA = N(6)-acetyl-L-lysyl-[protein] + CoA + H(+). N-alpha-acetyltransferase that specifically mediates the acetylation of N-terminal residues of the transmembrane proteins, with a strong preference for N-termini facing the cytosol. Displays N-terminal acetyltransferase activity towards a range of N-terminal sequences including those starting with Met-Lys, Met-Val, Met-Ala and Met-Met. Required for normal chromosomal segregation during anaphase. May also show histone acetyltransferase activity; such results are however unclear in vivo and would require additional experimental evidences. This Homo sapiens (Human) protein is N-alpha-acetyltransferase 60.